The sequence spans 700 residues: Translation initiation factor IF-2 (700 aa).

A disordered region spans residues 58–85 (KKEVKKQKEPSKEKGKSSEQVKVKEKSK). One can recognise a tr-type G domain in the interval 191–365 (PRPPVVTIMG…EMQEIRCIPD (175 aa)). The segment at 200–207 (GHVDHGKT) is G1. Residue 200–207 (GHVDHGKT) participates in GTP binding. The G2 stretch occupies residues 225–229 (GITQS). A G3 region spans residues 246–249 (DTPG). GTP-binding positions include 246 to 250 (DTPGH) and 300 to 303 (NKID). A G4 region spans residues 300 to 303 (NKID). Residues 337 to 339 (SAK) are G5.

The protein belongs to the TRAFAC class translation factor GTPase superfamily. Classic translation factor GTPase family. IF-2 subfamily.

The protein resides in the cytoplasm. One of the essential components for the initiation of protein synthesis. Protects formylmethionyl-tRNA from spontaneous hydrolysis and promotes its binding to the 30S ribosomal subunits. Also involved in the hydrolysis of GTP during the formation of the 70S ribosomal complex. The protein is Translation initiation factor IF-2 of Petrotoga mobilis (strain DSM 10674 / SJ95).